Consider the following 143-residue polypeptide: Phosphatidylethanolamine-binding protein homolog R644 (143 aa).

The protein belongs to the phosphatidylethanolamine-binding protein family.

The protein localises to the virion. This chain is Phosphatidylethanolamine-binding protein homolog R644, found in Acanthamoeba polyphaga mimivirus (APMV).